A 90-amino-acid chain; its full sequence is UPF0329 protein ECU04_1650 (90 aa).

It belongs to the UPF0329 family.

The polypeptide is UPF0329 protein ECU04_1650 (Encephalitozoon cuniculi (strain GB-M1) (Microsporidian parasite)).